A 346-amino-acid chain; its full sequence is MSTPTRTVTLVDTTLRDGMSSVSHRFTPNDVAAIAAGLDRAGVRTIEVAHGIGLGASSIQYGFAAATDPEYVRAAVDAVDHADIAVLYVPGIATLAELRAAVEAGIRTVRVAVHCTEADCAQQPVEWAKDHGLTVMTFLMMSHKLDPEPLAEQAVKLESYGADVVYVVDSAGAMVPRHAGDRVAALRRAISAEIGFHAHNNLGVGIANALTAAENGATFIDGSLRGLGASAGNAQTEVLAAAFERAGWHTGVELFPLIDTAEQVVAPLMTEPQIVDETALVLGYAGVYSTFFHPTKRAAAKFGVPTRDILLELGRRGVIGGQEDMIVDVASELAGRTYDLPARAGI.

In terms of domain architecture, Pyruvate carboxyltransferase spans 8 to 258 (VTLVDTTLRD…HTGVELFPLI (251 aa)). Residues 16–17 (RD), serine 170, and histidine 197 each bind substrate. Aspartate 17 contributes to the Mn(2+) binding site. The Mn(2+) site is built by histidine 197 and histidine 199. Tyrosine 288 provides a ligand contact to substrate.

Belongs to the 4-hydroxy-2-oxovalerate aldolase family.

It catalyses the reaction (S)-4-hydroxy-2-oxopentanoate = acetaldehyde + pyruvate. The protein is 4-hydroxy-2-oxovalerate aldolase 2 of Nocardia farcinica (strain IFM 10152).